Here is a 485-residue protein sequence, read N- to C-terminus: Glutamyl-tRNA(Gln) amidotransferase subunit A (485 aa).

Active-site charge relay system residues include K76 and S151. S175 functions as the Acyl-ester intermediate in the catalytic mechanism.

This sequence belongs to the amidase family. GatA subfamily. In terms of assembly, heterotrimer of A, B and C subunits.

The enzyme catalyses L-glutamyl-tRNA(Gln) + L-glutamine + ATP + H2O = L-glutaminyl-tRNA(Gln) + L-glutamate + ADP + phosphate + H(+). Its function is as follows. Allows the formation of correctly charged Gln-tRNA(Gln) through the transamidation of misacylated Glu-tRNA(Gln) in organisms which lack glutaminyl-tRNA synthetase. The reaction takes place in the presence of glutamine and ATP through an activated gamma-phospho-Glu-tRNA(Gln). The protein is Glutamyl-tRNA(Gln) amidotransferase subunit A of Pelagibacter ubique (strain HTCC1062).